A 397-amino-acid polypeptide reads, in one-letter code: ATP phosphoribosyltransferase regulatory subunit (397 aa).

Belongs to the class-II aminoacyl-tRNA synthetase family. HisZ subfamily. In terms of assembly, heteromultimer composed of HisG and HisZ subunits.

Its subcellular location is the cytoplasm. The protein operates within amino-acid biosynthesis; L-histidine biosynthesis; L-histidine from 5-phospho-alpha-D-ribose 1-diphosphate: step 1/9. In terms of biological role, required for the first step of histidine biosynthesis. May allow the feedback regulation of ATP phosphoribosyltransferase activity by histidine. The protein is ATP phosphoribosyltransferase regulatory subunit of Nitrosococcus oceani (strain ATCC 19707 / BCRC 17464 / JCM 30415 / NCIMB 11848 / C-107).